The primary structure comprises 1683 residues: ABC transporter 7 (1683 aa).

The helical transmembrane segment at 24–44 threads the bilayer; sequence DYLRILLPAVVIGLSVLNLGF. Residues 53 to 93 are disordered; sequence RSKSPSTHAYAPVSNGDNSRPGAHRTDISPDDDAIAQDDED. The segment covering 81 to 93 has biased composition (acidic residues); that stretch reads SPDDDAIAQDDED. 4 helical membrane-spanning segments follow: residues 127 to 147, 157 to 177, 190 to 210, and 221 to 241; these read LSVVVEELAIAGLVAVYVIAL, TLTGTIIGLTTWVYVLVLATL, HLWNHTAAIYSCQWLFLIGIF, and LAQILVIVEFALTSLLFFMAI. Residue N247 is glycosylated (N-linked (GlcNAc...) asparagine). The next 2 membrane-spanning stretches (helical) occupy residues 336–356 and 368–388; these read GWAVMSGMFTFAPTMLLKAIL and SVVWLYVILLPVTDIIRSLGD. Residues 338 to 664 form the ABC transmembrane type-1 1 domain; sequence AVMSGMFTFA…LGDMLAHVQE (327 aa). Residues 451 to 473 are disordered; that stretch reads GDNDESEDGKDGDKDKEDSSDEQ. N-linked (GlcNAc...) asparagine glycosylation occurs at N489. A run of 2 helical transmembrane segments spans residues 496–516 and 518–538; these read YLHFLFASAPTQLLVSVVLLY and VLGMSAIPGFVVMVLLLPVNI. N-linked (GlcNAc...) asparagine glycosylation is present at N545. 2 helical membrane-spanning segments follow: residues 602-622 and 632-648; these read VWACAVAVWNTVPLLITFFSF and PLHPSIAFTSISLFMLL. In terms of domain architecture, ABC transporter 1 spans 700–949; sequence IALKDAAFIW…GALGEEIAQK (250 aa). 742-749 provides a ligand contact to ATP; it reads GPTGSGKT. Residues 952 to 998 are disordered; it reads SETPNISRIPSRVPSSVGEGSGNTLLDTDGDDHLSKPKNAKKAKKAE. N956 carries N-linked (GlcNAc...) asparagine glycosylation. The chain crosses the membrane as a helical span at residues 1016 to 1036; the sequence is LYLASMGSWWFWVVAGCIFIS. The ABC transmembrane type-1 2 domain maps to 1028–1351; the sequence is VVAGCIFISQ…NILWLVRLYS (324 aa). The N-linked (GlcNAc...) asparagine glycan is linked to N1097. A run of 3 helical transmembrane segments spans residues 1111–1131, 1182–1202, and 1204–1224; these read AQYYLVVLAIIGLAGSLTAFL, VDQEVAPIAIGILSCALGITV, and VVLIASITPGFLIAAVFITIA. N-linked (GlcNAc...) asparagine glycosylation occurs at N1277. 2 helical membrane passes run 1304–1324 and 1327–1347; these read LLGDFVSFFAGVFVILSIGVI and GWAGISLSYAIGFAENILWLV. The region spanning 1392–1649 is the ABC transporter 2 domain; it reads VEFINYTTSY…GEGGSFKSMC (258 aa). N-linked (GlcNAc...) asparagine glycans are attached at residues N1396 and N1411. 1426 to 1433 contacts ATP; that stretch reads GRTGAGKS. N1541 and N1552 each carry an N-linked (GlcNAc...) asparagine glycan.

It belongs to the ABC transporter superfamily.

It localises to the membrane. ABC transporter; part of the gene cluster that mediates the biosynthesis of pyriculol and pyriculariol, two heptaketides that induce lesion formation upon application on rice leaves but are dispensable for pathogenicity. With the MFS transporter MFS1, is most likely responsible for pyriculol and pyriculariol secretion and thereby may contribute to intrinsic resistance. This chain is ABC transporter 7, found in Pyricularia oryzae (strain 70-15 / ATCC MYA-4617 / FGSC 8958) (Rice blast fungus).